Reading from the N-terminus, the 284-residue chain is MQKEFAFFPGCVLSQAAIESKKSIEAIAPVLGIKLREIEGWSCCGASQAQCVDPLATLVANARNLALAEQMNLPVLTTCSTCLLMLTRAKAELDRGAKDQINSFLAKGNMSYQGTSEVTSLLWVLAQNVEELKSKVKKPLSNLKVAVFYGCHSLRPEKDLGFESSTNPTSFETIVKALGAQVVPFEKRLNCCGFHAVYPAESSAMKMTSGIINTAAKSEAHCVVTPCPLCQMQLDIYQEDAQKIAKSKERVPVLHLSQLVGLALGIPAKELGLNHNVIDATKLG.

As to quaternary structure, the MFR complex is composed of three subunits: a flavoprotein (SdhA), an iron-sulfur protein (SdhB), and one hydrophobic anchor protein (SdhE).

The protein localises to the periplasm. It is found in the cell membrane. It catalyses the reaction 8-methylmenaquinone-6 + succinate = 8-methylmenaquinol-6 + fumarate. Functionally, membrane anchor subunit of 8-methylmenaquinol:fumarate reductase (MFR), that catalyzes the reduction of fumarate using 8-methylmenaquinol-6 as electron donor. The complex shows no succinate oxidation activity. Is involved in anaerobic metabolism. SdhE likely contains the quinol/quinone binding site. The protein is 8-methylmenaquinol:fumarate reductase membrane anchor subunit of Wolinella succinogenes (strain ATCC 29543 / DSM 1740 / CCUG 13145 / JCM 31913 / LMG 7466 / NCTC 11488 / FDC 602W) (Vibrio succinogenes).